The sequence spans 132 residues: MATMQFDLVSPERRLASMEVTEVQIPGADGDLTAMPDHSPMITTLRPGVLKVSGAEGEKSYFVTGGFADIAGPSATILAERAMPVEEVTGEIVEELIKASEEQKSAASDGAADAAAKYHADLTMTLDAIVGR.

Belongs to the ATPase epsilon chain family. F-type ATPases have 2 components, CF(1) - the catalytic core - and CF(0) - the membrane proton channel. CF(1) has five subunits: alpha(3), beta(3), gamma(1), delta(1), epsilon(1). CF(0) has three main subunits: a, b and c.

The protein localises to the cell inner membrane. Its function is as follows. Produces ATP from ADP in the presence of a proton gradient across the membrane. The sequence is that of ATP synthase epsilon chain from Jannaschia sp. (strain CCS1).